The chain runs to 420 residues: Tryptophan synthase beta chain (420 aa).

Lys-112 is modified (N6-(pyridoxal phosphate)lysine).

It belongs to the TrpB family. As to quaternary structure, tetramer of two alpha and two beta chains. Pyridoxal 5'-phosphate serves as cofactor.

It catalyses the reaction (1S,2R)-1-C-(indol-3-yl)glycerol 3-phosphate + L-serine = D-glyceraldehyde 3-phosphate + L-tryptophan + H2O. It functions in the pathway amino-acid biosynthesis; L-tryptophan biosynthesis; L-tryptophan from chorismate: step 5/5. The beta subunit is responsible for the synthesis of L-tryptophan from indole and L-serine. The polypeptide is Tryptophan synthase beta chain (Thermosipho africanus (strain TCF52B)).